Consider the following 249-residue polypeptide: DNA repair protein RecO (249 aa).

Belongs to the RecO family.

In terms of biological role, involved in DNA repair and RecF pathway recombination. This Solidesulfovibrio magneticus (strain ATCC 700980 / DSM 13731 / RS-1) (Desulfovibrio magneticus) protein is DNA repair protein RecO.